Consider the following 185-residue polypeptide: Ribosome-recycling factor (185 aa).

A disordered region spans residues 132 to 152 (RRDANEQLKKMEKDSELTEDD).

Belongs to the RRF family.

The protein resides in the cytoplasm. Functionally, responsible for the release of ribosomes from messenger RNA at the termination of protein biosynthesis. May increase the efficiency of translation by recycling ribosomes from one round of translation to another. The chain is Ribosome-recycling factor from Alkaliphilus metalliredigens (strain QYMF).